We begin with the raw amino-acid sequence, 364 residues long: Tyrosine-protein phosphatase YVH1 (364 aa).

A Tyrosine-protein phosphatase domain is found at 11–173; sequence EVTRILGGIY…LHLFEKMGGD (163 aa). The active-site Phosphocysteine intermediate is the Cys-117. A Phosphoserine modification is found at Ser-196.

The protein belongs to the protein-tyrosine phosphatase family. Non-receptor class dual specificity subfamily.

The catalysed reaction is O-phospho-L-tyrosyl-[protein] + H2O = L-tyrosyl-[protein] + phosphate. Functionally, may be directly involved in signal transduction and/or cell cycle regulation. It is necessary for maintaining growth rate or spore germination. Could show both activity toward tyrosine-protein phosphate as well as with serine-protein phosphate. The chain is Tyrosine-protein phosphatase YVH1 (YVH1) from Saccharomyces cerevisiae (strain ATCC 204508 / S288c) (Baker's yeast).